The primary structure comprises 183 residues: Peptide deformylase (183 aa).

Positions 110 and 153 each coordinate Fe cation. Residue Glu-154 is part of the active site. His-157 is a Fe cation binding site.

The protein belongs to the polypeptide deformylase family. Fe(2+) is required as a cofactor.

It carries out the reaction N-terminal N-formyl-L-methionyl-[peptide] + H2O = N-terminal L-methionyl-[peptide] + formate. In terms of biological role, removes the formyl group from the N-terminal Met of newly synthesized proteins. Requires at least a dipeptide for an efficient rate of reaction. N-terminal L-methionine is a prerequisite for activity but the enzyme has broad specificity at other positions. The protein is Peptide deformylase of Listeria monocytogenes serotype 4b (strain CLIP80459).